Consider the following 89-residue polypeptide: Small ribosomal subunit protein uS15 (89 aa).

The protein belongs to the universal ribosomal protein uS15 family. In terms of assembly, part of the 30S ribosomal subunit. Forms a bridge to the 50S subunit in the 70S ribosome, contacting the 23S rRNA.

Functionally, one of the primary rRNA binding proteins, it binds directly to 16S rRNA where it helps nucleate assembly of the platform of the 30S subunit by binding and bridging several RNA helices of the 16S rRNA. Forms an intersubunit bridge (bridge B4) with the 23S rRNA of the 50S subunit in the ribosome. The chain is Small ribosomal subunit protein uS15 from Methylorubrum populi (strain ATCC BAA-705 / NCIMB 13946 / BJ001) (Methylobacterium populi).